We begin with the raw amino-acid sequence, 183 residues long: Putative 3-methyladenine DNA glycosylase (183 aa).

It belongs to the DNA glycosylase MPG family.

This is Putative 3-methyladenine DNA glycosylase from Wolbachia pipientis subsp. Culex pipiens (strain wPip).